The chain runs to 415 residues: Glucose-6-phosphate isomerase (415 aa).

Glu-267 serves as the catalytic Proton donor. Catalysis depends on residues His-293 and Lys-406.

It belongs to the GPI family.

The protein resides in the cytoplasm. It carries out the reaction alpha-D-glucose 6-phosphate = beta-D-fructose 6-phosphate. It participates in carbohydrate biosynthesis; gluconeogenesis. It functions in the pathway carbohydrate degradation; glycolysis; D-glyceraldehyde 3-phosphate and glycerone phosphate from D-glucose: step 2/4. Functionally, catalyzes the reversible isomerization of glucose-6-phosphate to fructose-6-phosphate. The sequence is that of Glucose-6-phosphate isomerase from Thermus thermophilus (strain ATCC 27634 / DSM 579 / HB8).